The sequence spans 151 residues: D-aminoacyl-tRNA deacylase (151 aa).

Positions 136–137 (GP) match the Gly-cisPro motif, important for rejection of L-amino acids motif.

This sequence belongs to the DTD family. Homodimer.

The protein localises to the cytoplasm. The catalysed reaction is glycyl-tRNA(Ala) + H2O = tRNA(Ala) + glycine + H(+). The enzyme catalyses a D-aminoacyl-tRNA + H2O = a tRNA + a D-alpha-amino acid + H(+). An aminoacyl-tRNA editing enzyme that deacylates mischarged D-aminoacyl-tRNAs. Also deacylates mischarged glycyl-tRNA(Ala), protecting cells against glycine mischarging by AlaRS. Acts via tRNA-based rather than protein-based catalysis; rejects L-amino acids rather than detecting D-amino acids in the active site. By recycling D-aminoacyl-tRNA to D-amino acids and free tRNA molecules, this enzyme counteracts the toxicity associated with the formation of D-aminoacyl-tRNA entities in vivo and helps enforce protein L-homochirality. The protein is D-aminoacyl-tRNA deacylase of Lactococcus lactis subsp. cremoris (strain MG1363).